Consider the following 427-residue polypeptide: Mitogen-activated protein kinase 8B (427 aa).

The region spanning 26–321 is the Protein kinase domain; that stretch reads YQNLRPIGSG…VDEALQHPYI (296 aa). ATP is bound by residues 33-40 and Lys-55; that span reads GSGAQGIV. Asp-151 serves as the catalytic Proton acceptor. Phosphothreonine is present on Thr-183. The short motif at 183–185 is the TXY element; sequence TPY. At Tyr-185 the chain carries Phosphotyrosine. A disordered region spans residues 372-427; it reads IRGQPSPIGAAVINGSPQPSSSSSINDVSSMSTEPTVASDTDSSLEASAGPLSCCR. The span at 387-403 shows a compositional bias: low complexity; it reads SPQPSSSSSINDVSSMS. Positions 404 to 417 are enriched in polar residues; the sequence is TEPTVASDTDSSLE.

The protein belongs to the protein kinase superfamily. CMGC Ser/Thr protein kinase family. MAP kinase subfamily. The cofactor is Mg(2+). Post-translationally, dually phosphorylated on Thr-183 and Tyr-185, which activates the enzyme. Expressed at high levels in the ovary and at lower levels in brain, gill, heart, spleen, liver, kidney, muscle, bladder and gut.

It catalyses the reaction L-seryl-[protein] + ATP = O-phospho-L-seryl-[protein] + ADP + H(+). It carries out the reaction L-threonyl-[protein] + ATP = O-phospho-L-threonyl-[protein] + ADP + H(+). Its activity is regulated as follows. Activated by threonine and tyrosine phosphorylation. Responds to activation by environmental stress and pro-inflammatory cytokines by phosphorylating a number of transcription factors, primarily components of AP-1 such as c-Jun and ATF2 and thus regulates AP-1 transcriptional activity. May play a role in the regulation of the circadian clock. The protein is Mitogen-activated protein kinase 8B (mapk8b) of Cyprinus carpio (Common carp).